The sequence spans 411 residues: MTKFFFKRLQTAPLDQEVSSLDASDYYYRIAFFLGWTPPKGALLRWIYSLWTLTTMWLGIVYLPLGLSLTYVKHFDRFTPTEFLTSLQVDINCIGNVIKSCVTYSQMWRFRRMNELISSLDKRCVTTTQRRIFHKMVARVNLIVILFLSTYLGFCFLTLFTSVFAGKAPWQLYNPLVDWRKGHWQLWIASILEYCVVSIGTMQELMSDTYAIVFISLFRCHLAILRDRIANLRQDPKLSEMEHYEQMVACIQDHRTIIQCSQIIRPILSITIFAQFMLVGIDLGLAAISILFFPNTIWTIMANVSFIVAICTESFPCCMLCEHLIEDSVHVSNALFHSNWITADRSYKSAVLYFLHRAQQPIQFTAGSIFPISVQSNIAVAKFAFTIITIVNQMNLGEKFFSDRSNGDINP.

Over 1 to 46 (MTKFFFKRLQTAPLDQEVSSLDASDYYYRIAFFLGWTPPKGALLRW) the chain is Cytoplasmic. The chain crosses the membrane as a helical span at residues 47 to 67 (IYSLWTLTTMWLGIVYLPLGL). Residues 68 to 86 (SLTYVKHFDRFTPTEFLTS) lie on the Extracellular side of the membrane. The helical transmembrane segment at 87 to 107 (LQVDINCIGNVIKSCVTYSQM) threads the bilayer. The Cytoplasmic segment spans residues 108–139 (WRFRRMNELISSLDKRCVTTTQRRIFHKMVAR). A helical transmembrane segment spans residues 140 to 160 (VNLIVILFLSTYLGFCFLTLF). Residues 161-185 (TSVFAGKAPWQLYNPLVDWRKGHWQ) are Extracellular-facing. A helical transmembrane segment spans residues 186 to 206 (LWIASILEYCVVSIGTMQELM). At 207-271 (SDTYAIVFIS…QIIRPILSIT (65 aa)) the chain is on the cytoplasmic side. Residues 272-292 (IFAQFMLVGIDLGLAAISILF) traverse the membrane as a helical segment. The Extracellular portion of the chain corresponds to 293–296 (FPNT). Residues 297–317 (IWTIMANVSFIVAICTESFPC) traverse the membrane as a helical segment. Residues 318-369 (CMLCEHLIEDSVHVSNALFHSNWITADRSYKSAVLYFLHRAQQPIQFTAGSI) are Cytoplasmic-facing. A helical transmembrane segment spans residues 370–390 (FPISVQSNIAVAKFAFTIITI). The Extracellular segment spans residues 391–411 (VNQMNLGEKFFSDRSNGDINP).

This sequence belongs to the insect chemoreceptor superfamily. Heteromeric odorant receptor channel (TC 1.A.69) family. Or2a subfamily. Interacts with Orco. Complexes exist early in the endomembrane system in olfactory sensory neurons (OSNs), coupling these complexes to the conserved ciliary trafficking pathway. As to expression, expressed in olfactory sensory neurons in the maxillary palp.

The protein resides in the cell membrane. Its function is as follows. Odorant receptor which mediates acceptance or avoidance behavior, depending on its substrates. The odorant receptor repertoire encodes a large collection of odor stimuli that vary widely in identity, intensity, and duration. May form a complex with Orco to form odorant-sensing units, providing sensitive and prolonged odorant signaling and calcium permeability. This Drosophila melanogaster (Fruit fly) protein is Putative odorant receptor 59c (Or59c).